The following is a 348-amino-acid chain: NADH-ubiquinone oxidoreductase chain 2 (348 aa).

10 consecutive transmembrane segments (helical) span residues 3 to 23 (PIII…VLMS), 25 to 45 (HWFM…PVLM), 59 to 79 (YFLT…INLI), 93 to 115 (TAST…HFWV), 149 to 169 (LNMT…GWGG), 178 to 198 (ILAF…MFNP), 201 to 221 (TLLN…ILIF), 239 to 259 (IMTV…PLSG), 276 to 296 (IALA…YMRL), and 326 to 346 (LPTL…MMML).

This sequence belongs to the complex I subunit 2 family. Core subunit of respiratory chain NADH dehydrogenase (Complex I) which is composed of 45 different subunits. Interacts with TMEM242.

The protein resides in the mitochondrion inner membrane. It catalyses the reaction a ubiquinone + NADH + 5 H(+)(in) = a ubiquinol + NAD(+) + 4 H(+)(out). Functionally, core subunit of the mitochondrial membrane respiratory chain NADH dehydrogenase (Complex I) which catalyzes electron transfer from NADH through the respiratory chain, using ubiquinone as an electron acceptor. Essential for the catalytic activity and assembly of complex I. The polypeptide is NADH-ubiquinone oxidoreductase chain 2 (Thyroptera tricolor (Spix's disk-winged bat)).